Reading from the N-terminus, the 420-residue chain is D-tagatose-1,6-bisphosphate aldolase subunit GatZ (420 aa).

It belongs to the GatZ/KbaZ family. GatZ subfamily. In terms of assembly, forms a complex with GatY.

Its pathway is carbohydrate metabolism; D-tagatose 6-phosphate degradation; D-glyceraldehyde 3-phosphate and glycerone phosphate from D-tagatose 6-phosphate: step 2/2. Component of the tagatose-1,6-bisphosphate aldolase GatYZ that is required for full activity and stability of the Y subunit. Could have a chaperone-like function for the proper and stable folding of GatY. When expressed alone, GatZ does not show any aldolase activity. Is involved in the catabolism of galactitol. This is D-tagatose-1,6-bisphosphate aldolase subunit GatZ from Shigella flexneri serotype 5b (strain 8401).